A 559-amino-acid polypeptide reads, in one-letter code: Pentatricopeptide repeat-containing protein At1g08610 (559 aa).

13 PPR repeats span residues 103–137 (DEETNNEILHNLCSNGKLTDACKLVEVMARHNQVP), 138–172 (HFPSCSNLVRGLARIDQLDKAMCILRVMVMSGGVP), 173–207 (DTITYNMIIGNLCKKGHIRTALVLLEDMSLSGSPP), 208–242 (DVITYNTVIRCMFDYGNAEQAIRFWKDQLQNGCPP), 243–277 (FMITYTVLVELVCRYCGSARAIEVLEDMAVEGCYP), 278–312 (DIVTYNSLVNYNCRRGNLEEVASVIQHILSHGLEL), 313–347 (NTVTYNTLLHSLCSHEYWDEVEEILNIMYQTSYCP), 348–382 (TVITYNILINGLCKARLLSRAIDFFYQMLEQKCLP), 383–417 (DIVTYNTVLGAMSKEGMVDDAIELLGLLKNTCCPP), 418–452 (GLITYNSVIDGLAKKGLMKKALELYHQMLDAGIFP), 453–487 (DDITRRSLIYGFCRANLVEEAGQVLKETSNRGNGI), 488–522 (RGSTYRLVIQGLCKKKEIEMAIEVVEIMLTGGCKP), and 523–557 (DETIYTAIVKGVEEMGMGSEAVQLQKKLKQWKLLK).

It belongs to the PPR family. P subfamily.

The polypeptide is Pentatricopeptide repeat-containing protein At1g08610 (Arabidopsis thaliana (Mouse-ear cress)).